The primary structure comprises 1438 residues: DNA-directed RNA polymerase subunit beta' (1438 aa).

Zn(2+) is bound by residues Cys72, Cys74, Cys87, and Cys90. Mg(2+)-binding residues include Asp483, Asp485, and Asp487. Zn(2+) is bound by residues Cys831, Cys905, Cys912, and Cys915.

This sequence belongs to the RNA polymerase beta' chain family. In terms of assembly, the RNAP catalytic core consists of 2 alpha, 1 beta, 1 beta' and 1 omega subunit. When a sigma factor is associated with the core the holoenzyme is formed, which can initiate transcription. The cofactor is Mg(2+). Requires Zn(2+) as cofactor.

The enzyme catalyses RNA(n) + a ribonucleoside 5'-triphosphate = RNA(n+1) + diphosphate. Functionally, DNA-dependent RNA polymerase catalyzes the transcription of DNA into RNA using the four ribonucleoside triphosphates as substrates. In Flavobacterium psychrophilum (strain ATCC 49511 / DSM 21280 / CIP 103535 / JIP02/86), this protein is DNA-directed RNA polymerase subunit beta'.